A 481-amino-acid polypeptide reads, in one-letter code: DNA gyrase subunit B (481 aa).

Positions 323–442 (CELYLVEGDS…QGYVYIAQPP (120 aa)) constitute a Toprim domain. 3 residues coordinate Mg(2+): glutamate 329, aspartate 407, and aspartate 409.

The protein belongs to the type II topoisomerase GyrB family. As to quaternary structure, heterotetramer, composed of two GyrA and two GyrB chains. In the heterotetramer, GyrA contains the active site tyrosine that forms a transient covalent intermediate with DNA, while GyrB binds cofactors and catalyzes ATP hydrolysis. Mg(2+) is required as a cofactor. It depends on Mn(2+) as a cofactor. Ca(2+) serves as cofactor.

The protein resides in the cytoplasm. It catalyses the reaction ATP-dependent breakage, passage and rejoining of double-stranded DNA.. In terms of biological role, a type II topoisomerase that negatively supercoils closed circular double-stranded (ds) DNA in an ATP-dependent manner to modulate DNA topology and maintain chromosomes in an underwound state. Negative supercoiling favors strand separation, and DNA replication, transcription, recombination and repair, all of which involve strand separation. Also able to catalyze the interconversion of other topological isomers of dsDNA rings, including catenanes and knotted rings. Type II topoisomerases break and join 2 DNA strands simultaneously in an ATP-dependent manner. The chain is DNA gyrase subunit B (gyrB) from Chitinophaga japonensis (Flexibacter japonensis).